A 238-amino-acid chain; its full sequence is Ribonuclease PH (238 aa).

Positions 66–88 (LPRSTHTRSDREAARGKQSGRTQ) are disordered. Phosphate contacts are provided by residues Arg86 and 124-126 (GTR).

Belongs to the RNase PH family. Homohexameric ring arranged as a trimer of dimers.

The catalysed reaction is tRNA(n+1) + phosphate = tRNA(n) + a ribonucleoside 5'-diphosphate. Phosphorolytic 3'-5' exoribonuclease that plays an important role in tRNA 3'-end maturation. Removes nucleotide residues following the 3'-CCA terminus of tRNAs; can also add nucleotides to the ends of RNA molecules by using nucleoside diphosphates as substrates, but this may not be physiologically important. Probably plays a role in initiation of 16S rRNA degradation (leading to ribosome degradation) during starvation. The protein is Ribonuclease PH of Ralstonia pickettii (strain 12J).